Reading from the N-terminus, the 485-residue chain is MITRETLKSLPANVQAPPYDIDGIKPGIVHFGVGNFFRAHEAFYVEQILEHAPDWAIVGVGLTGSDRSKKKAEEFKAQDCLYSLTETAPSGKSTVRVMGALRDYLLAPADPEAVLKHLVDPAIRIVSMTITEGGYNINETTGAFDLENAAVKADLQNPEKPSTVFGYVVEALRRRRDAGGKAFTVMSCDNLRHNGNVARKAFLGYAKARDPELAKWIEENATFPNGMVDRITPTVSAEIAKKLNAASGLDDDLPLVAEDFHQWVLEDRFANGRPPLEKAGVQLVDDVTDWEHVKIRMLNAGHITLCFPGILVGYENVDDAIEDKDLRGNLENYLNKDVIPTLKAPPGMTLEGYRDSVISRFSNKAMSDQTLRIASDGCSKIQVFWTETVRRAIECKRDLSRIAFGIASYLEMLRGRDEKGGTYESSEPTYGEAQKKLAKADDFESALKLPAFDGWRDLDTSELDQKVIALRKVIREKGVKAAIPA.

This sequence belongs to the mannitol dehydrogenase family.

Its subcellular location is the cytoplasm. The sequence is that of Polyol:NADP oxidoreductase (por) from Gluconobacter oxydans (strain 621H) (Gluconobacter suboxydans).